The chain runs to 283 residues: Non-selective voltage-gated ion channel VDAC3 (283 aa).

Position 2 is an N-acetylcysteine (cysteine 2). Threonine 4 carries the phosphothreonine modification. N6-acetyllysine occurs at positions 12, 15, and 20. Beta stranded transmembrane passes span 26 to 35 (MVKIDLKTKS) and 39 to 47 (VEFSTSGHA). Lysine 53 participates in a covalent cross-link: Glycyl lysine isopeptide (Lys-Gly) (interchain with G-Cter in ubiquitin). The next 3 membrane-spanning stretches (beta stranded) occupy residues 54–64 (ASGNLETKYKV), 69–76 (LTFTQKWN), and 80–89 (TLGTEISWEN). Lysine 90 carries the N6-acetyllysine modification. Residues 95–104 (LKLTLDTIFV) traverse the membrane as a beta stranded segment. Glycyl lysine isopeptide (Lys-Gly) (interchain with G-Cter in ubiquitin) cross-links involve residues lysine 109 and lysine 110. 10 beta stranded membrane-spanning segments follow: residues 111-120 (SGKLKASYRR), 123-130 (FSLGSNVD), 137-145 (TIYGWAVLA), 150-158 (LAGYQMSFD), 163-175 (KLSQ…GYKA), 178-185 (FQLHTHVN), 189-198 (EFGGSIYQKV), 202-211 (IETSINLAWT), 218-227 (RFGIAAKYKL), and 231-238 (TSLSAKVN). Residue serine 241 is modified to Phosphoserine. Residues 242 to 244 (LIG) and 260 to 264 (SALID) each bind NAD(+). Transmembrane regions (beta stranded) follow at residues 242–251 (LIGLGYTQTL) and 254–263 (GVKLTLSALI). Residue lysine 266 is modified to N6-acetyllysine; alternate. Residue lysine 266 forms a Glycyl lysine isopeptide (Lys-Gly) (interchain with G-Cter in ubiquitin); alternate linkage. A beta stranded transmembrane segment spans residues 273 to 282 (HKVGLGFELE).

This sequence belongs to the eukaryotic mitochondrial porin family. Interacts with ARMC12 in a TBC1D21-dependent manner. Interacts with MISFA. In terms of processing, ubiquitinated by PRKN during mitophagy, leading to its degradation and enhancement of mitophagy. Deubiquitinated by USP30. As to expression, highest levels of expression detected in testis, less but still abundant expression in heart, kidney, brain, and skeletal muscle.

Its subcellular location is the mitochondrion outer membrane. It localises to the membrane. It carries out the reaction chloride(in) = chloride(out). It catalyses the reaction K(+)(in) = K(+)(out). In terms of biological role, non-selective voltage-gated ion channel that mediates the transport of anions and cations through the mitochondrion outer membrane and plasma membrane. Forms a high-conducting channel with a stable open state and a voltage-induced closure with a mild preference for anions over cations. Involved in male fertility and sperm mitochondrial sheath formation. The polypeptide is Non-selective voltage-gated ion channel VDAC3 (Mus musculus (Mouse)).